The primary structure comprises 217 residues: Ufm1-specific protease 1 (217 aa).

Active-site residues include cysteine 53, aspartate 175, and histidine 177.

The protein belongs to the peptidase C78 family. As to expression, widely expressed. Expressed at higher level in brain, heart, kidney and skeletal muscle.

The protein localises to the cytoplasm. It is found in the cytosol. In terms of biological role, thiol-dependent isopeptidase that specifically mediate the processing of UFM1 precursors as well as the deconjugation of UFM1 from target proteins. Mainly responsible for the maturation of the UFM1 precursor, a prerequisite for conjugation reactions. This is Ufm1-specific protease 1 from Mus musculus (Mouse).